Reading from the N-terminus, the 344-residue chain is Putative NAD(P)H nitroreductase MT3217 (344 aa).

FMN-binding positions include 40 to 44 and R326; that span reads QPWRW.

It belongs to the nitroreductase family. In terms of assembly, interacts with human TLR2. The cofactor is FMN.

Its function is as follows. Stimulates pro-inflammatory cytokine expression via TLR2 signaling pathway. Activation of TLR2 results in the phosphorylation and activation of NF-kappa-B. Also induces TLR2 expression. May influence the innate immune responses to facilitate the survival of M.tuberculosis in the granulomatous microenvironment. The sequence is that of Putative NAD(P)H nitroreductase MT3217 from Mycobacterium tuberculosis (strain CDC 1551 / Oshkosh).